The sequence spans 227 residues: Adenosylcobinamide-GDP ribazoletransferase (227 aa).

5 consecutive transmembrane segments (helical) span residues 3–23 (CLKAVVAFFTALPVGGAELDF), 26–46 (IWATPYLAGLMVGGAGGAVYF), 95–115 (GVGGIFAVVALFVLAASARPE), 117–137 (WLDYIVTDLYSKALALVVAAY), and 165–185 (AVAAWLHPAAFLAATVLSLFF).

It belongs to the CobS family. It depends on Mg(2+) as a cofactor.

Its subcellular location is the cell membrane. It carries out the reaction alpha-ribazole + adenosylcob(III)inamide-GDP = adenosylcob(III)alamin + GMP + H(+). It catalyses the reaction alpha-ribazole 5'-phosphate + adenosylcob(III)inamide-GDP = adenosylcob(III)alamin 5'-phosphate + GMP + H(+). Its pathway is cofactor biosynthesis; adenosylcobalamin biosynthesis; adenosylcobalamin from cob(II)yrinate a,c-diamide: step 7/7. Joins adenosylcobinamide-GDP and alpha-ribazole to generate adenosylcobalamin (Ado-cobalamin). Also synthesizes adenosylcobalamin 5'-phosphate from adenosylcobinamide-GDP and alpha-ribazole 5'-phosphate. The protein is Adenosylcobinamide-GDP ribazoletransferase of Pyrobaculum islandicum (strain DSM 4184 / JCM 9189 / GEO3).